The following is a 1155-amino-acid chain: DNA-directed RNA polymerase subunit beta (1155 aa).

It belongs to the RNA polymerase beta chain family. In terms of assembly, the RNAP catalytic core consists of 2 alpha, 1 beta, 1 beta' and 1 omega subunit. When a sigma factor is associated with the core the holoenzyme is formed, which can initiate transcription.

The enzyme catalyses RNA(n) + a ribonucleoside 5'-triphosphate = RNA(n+1) + diphosphate. In terms of biological role, DNA-dependent RNA polymerase catalyzes the transcription of DNA into RNA using the four ribonucleoside triphosphates as substrates. This Borreliella afzelii (strain PKo) (Borrelia afzelii) protein is DNA-directed RNA polymerase subunit beta.